A 159-amino-acid polypeptide reads, in one-letter code: 2-C-methyl-D-erythritol 2,4-cyclodiphosphate synthase (159 aa).

The a divalent metal cation site is built by aspartate 9 and histidine 11. 4-CDP-2-C-methyl-D-erythritol 2-phosphate contacts are provided by residues 9 to 11 and 35 to 36; these read DVH and HS. Position 43 (histidine 43) interacts with a divalent metal cation. Residues 57–59, 62–66, 133–136, phenylalanine 140, and arginine 143 contribute to the 4-CDP-2-C-methyl-D-erythritol 2-phosphate site; these read DIG, FPDTD, and TTTE.

It belongs to the IspF family. As to quaternary structure, homotrimer. A divalent metal cation is required as a cofactor.

The catalysed reaction is 4-CDP-2-C-methyl-D-erythritol 2-phosphate = 2-C-methyl-D-erythritol 2,4-cyclic diphosphate + CMP. Its pathway is isoprenoid biosynthesis; isopentenyl diphosphate biosynthesis via DXP pathway; isopentenyl diphosphate from 1-deoxy-D-xylulose 5-phosphate: step 4/6. Its function is as follows. Involved in the biosynthesis of isopentenyl diphosphate (IPP) and dimethylallyl diphosphate (DMAPP), two major building blocks of isoprenoid compounds. Catalyzes the conversion of 4-diphosphocytidyl-2-C-methyl-D-erythritol 2-phosphate (CDP-ME2P) to 2-C-methyl-D-erythritol 2,4-cyclodiphosphate (ME-CPP) with a corresponding release of cytidine 5-monophosphate (CMP). In Mannheimia succiniciproducens (strain KCTC 0769BP / MBEL55E), this protein is 2-C-methyl-D-erythritol 2,4-cyclodiphosphate synthase.